We begin with the raw amino-acid sequence, 196 residues long: Probable histone chaperone ASF1A (196 aa).

Residues 146–157 (VTKFPIDFHPEE) show a composition bias toward basic and acidic residues. Positions 146–196 (VTKFPIDFHPEEEQTAATAAPPEQSDEQQPNVNGEAQVLPDQSVEPKPEES) are disordered.

It belongs to the ASF1 family. As to quaternary structure, interacts with histone H3 and histone H4. Component of the HIRA complex made of UBN1, UBN2, ASF1A, CABIN1 and HIRA. Interacts with HIRA. As to expression, expressed in leaves and flower buds.

Its subcellular location is the nucleus. It localises to the nucleolus. Its function is as follows. Histone chaperone that facilitates histone deposition and histone exchange and removal during nucleosome assembly and disassembly. While encoded by a region of the Arabidopsis thaliana genome that is homologous to the Brassica S-locus for self incompatibility, this protein may not play the same role in Arabidopsis thaliana. This Arabidopsis thaliana (Mouse-ear cress) protein is Probable histone chaperone ASF1A (ASF1A).